The sequence spans 149 residues: Deoxyuridine 5'-triphosphate nucleotidohydrolase (149 aa).

Substrate contacts are provided by residues 68–70, asparagine 81, 85–87, and methionine 95; these read RSG and LID.

This sequence belongs to the dUTPase family. Mg(2+) serves as cofactor.

It carries out the reaction dUTP + H2O = dUMP + diphosphate + H(+). It participates in pyrimidine metabolism; dUMP biosynthesis; dUMP from dCTP (dUTP route): step 2/2. In terms of biological role, this enzyme is involved in nucleotide metabolism: it produces dUMP, the immediate precursor of thymidine nucleotides and it decreases the intracellular concentration of dUTP so that uracil cannot be incorporated into DNA. In Bordetella bronchiseptica (strain ATCC BAA-588 / NCTC 13252 / RB50) (Alcaligenes bronchisepticus), this protein is Deoxyuridine 5'-triphosphate nucleotidohydrolase.